A 194-amino-acid polypeptide reads, in one-letter code: Protein GrpE (194 aa).

Residues Met1–Ser14 show a composition bias toward basic and acidic residues. Residues Met1–Val48 form a disordered region. The segment covering Ala24–Ala34 has biased composition (polar residues).

Belongs to the GrpE family. In terms of assembly, homodimer.

Its subcellular location is the cytoplasm. Participates actively in the response to hyperosmotic and heat shock by preventing the aggregation of stress-denatured proteins, in association with DnaK and GrpE. It is the nucleotide exchange factor for DnaK and may function as a thermosensor. Unfolded proteins bind initially to DnaJ; upon interaction with the DnaJ-bound protein, DnaK hydrolyzes its bound ATP, resulting in the formation of a stable complex. GrpE releases ADP from DnaK; ATP binding to DnaK triggers the release of the substrate protein, thus completing the reaction cycle. Several rounds of ATP-dependent interactions between DnaJ, DnaK and GrpE are required for fully efficient folding. This chain is Protein GrpE, found in Parabacteroides distasonis (strain ATCC 8503 / DSM 20701 / CIP 104284 / JCM 5825 / NCTC 11152).